The chain runs to 565 residues: Adenine deaminase (565 aa).

Belongs to the metallo-dependent hydrolases superfamily. Adenine deaminase family. Requires Mn(2+) as cofactor.

It carries out the reaction adenine + H2O + H(+) = hypoxanthine + NH4(+). The chain is Adenine deaminase from Cereibacter sphaeroides (strain ATCC 17023 / DSM 158 / JCM 6121 / CCUG 31486 / LMG 2827 / NBRC 12203 / NCIMB 8253 / ATH 2.4.1.) (Rhodobacter sphaeroides).